We begin with the raw amino-acid sequence, 117 residues long: MAWTPLFLFLLTCCPGSNSQTVVTQEPSLTVSPGGTVTLTCASSTGAVTSGYYPNWFQQKPGQAPRALIYSTSNKHSWTPARFSGSLLGGKAALTLSGVQPEDEAEYYCLLYYGGAQ.

The signal sequence occupies residues 1 to 19 (MAWTPLFLFLLTCCPGSNS). A framework-1 region spans residues 20–44 (QTVVTQEPSLTVSPGGTVTLTCASS). An Ig-like domain is found at 20–117 (QTVVTQEPSL…YCLLYYGGAQ (98 aa)). A disulfide bridge links C41 with C109. The tract at residues 45–53 (TGAVTSGYY) is complementarity-determining-1. The segment at 54–70 (PNWFQQKPGQAPRALIY) is framework-2. Residues 71–73 (STS) are complementarity-determining-2. Positions 74 to 109 (NKHSWTPARFSGSLLGGKAALTLSGVQPEDEAEYYC) are framework-3. A complementarity-determining-3 region spans residues 110–117 (LLYYGGAQ).

Immunoglobulins are composed of two identical heavy chains and two identical light chains; disulfide-linked.

It localises to the secreted. It is found in the cell membrane. Its function is as follows. V region of the variable domain of immunoglobulin light chains that participates in the antigen recognition. Immunoglobulins, also known as antibodies, are membrane-bound or secreted glycoproteins produced by B lymphocytes. In the recognition phase of humoral immunity, the membrane-bound immunoglobulins serve as receptors which, upon binding of a specific antigen, trigger the clonal expansion and differentiation of B lymphocytes into immunoglobulins-secreting plasma cells. Secreted immunoglobulins mediate the effector phase of humoral immunity, which results in the elimination of bound antigens. The antigen binding site is formed by the variable domain of one heavy chain, together with that of its associated light chain. Thus, each immunoglobulin has two antigen binding sites with remarkable affinity for a particular antigen. The variable domains are assembled by a process called V-(D)-J rearrangement and can then be subjected to somatic hypermutations which, after exposure to antigen and selection, allow affinity maturation for a particular antigen. The chain is Immunoglobulin lambda variable 7-43 from Homo sapiens (Human).